A 313-amino-acid chain; its full sequence is MTFDENISRILVTDKEYDMPFSKGLLARSLSAAGMKPSESYTLAREIERDLNEQNVLKISKDELRRRVYYTLINRDYEGIGEKYLLWRRVLKKHSIIILVGGSSGVGTSTIAFELASRLGIPSVIGTDSIREVMRRSISKDLVPMLYESSYTAWTALRRSPWDEQDTKEMHLLGFERHVEPVLLGIESIIDRSLTEGTSVILEGTHIVPGLMGEKYHSMPNVIFLNLTLSSEETHKKRFTARAKVSDRPLERYLENFEIIKEINQYIVEKSKENNVPVIENVSISETVQKCLEIVTERFSNLNDEPIIDSDIY.

The 88-residue stretch at 8–95 (SRILVTDKEY…LWRRVLKKHS (88 aa)) folds into the ATP-cone domain.

This sequence belongs to the 2-phosphoglycerate kinase family. The cofactor is a divalent metal cation.

The catalysed reaction is (2R)-2-phosphoglycerate + ATP = (2R)-2,3-bisphosphoglycerate + ADP + H(+). It participates in thermoadapter biosynthesis; cyclic 2,3-diphosphoglycerate biosynthesis; cyclic 2,3-diphosphoglycerate from 2-phospho-D-glycerate: step 1/2. In terms of biological role, catalyzes the phosphorylation of 2-phosphoglycerate to 2,3-diphosphoglycerate. Involved in the biosynthesis of cyclic 2,3-bisphosphoglycerate, a thermoprotectant. This Methanococcus maripaludis (strain C6 / ATCC BAA-1332) protein is 2-phosphoglycerate kinase.